Reading from the N-terminus, the 87-residue chain is Large ribosomal subunit protein bL27 (87 aa).

A disordered region spans residues 1 to 21 (MAHKKAGGSSRNGRDSESKRL).

The protein belongs to the bacterial ribosomal protein bL27 family.

The polypeptide is Large ribosomal subunit protein bL27 (Paraburkholderia phytofirmans (strain DSM 17436 / LMG 22146 / PsJN) (Burkholderia phytofirmans)).